The primary structure comprises 168 residues: Protein GRIM REAPER (168 aa).

An N-terminal signal peptide occupies residues 1–30; that stretch reads MVIKIPNTFIKATSLLSLILYFLIIATSKS. Asparagine 59 carries N-linked (GlcNAc...) asparagine glycosylation.

This sequence belongs to the STIG1 family. As to quaternary structure, interacts with PRK5 and to a lower extent with PRK4. As to expression, highly expressed in flowers, and at very low levels in leaves.

The protein localises to the secreted. The protein resides in the extracellular space. It is found in the apoplast. Its function is as follows. Involved in the regulation of cell death induced by extracellular reactive oxygen species. Only the processed peptide, and not the full length GRI can bind in vivo to the extracellular domain of the receptor PRK5. The GRIp-induced cell death is superoxide and salicylic acid dependent. In Arabidopsis thaliana (Mouse-ear cress), this protein is Protein GRIM REAPER.